The chain runs to 51 residues: Astexin-1 (51 aa).

Residues 1–28 constitute a propeptide that is removed on maturation; it reads MHTPIISETVQPKTAGLIVLGKASAETR. The segment at residues 29–37 is a cross-link (isoaspartyl glycine isopeptide (Gly-Asp)); it reads GLSQGVEPD.

This lasso peptide is probably hydrolyzed to a linear form by the isopeptidase AtxE1, in vivo.

Shows weak antimicrobial activity against its phylogenetic relative Caulobacter crescentus. Does not show activity against other bacteria tested (E.coli, Vibrio sp, Burkhoderia thailandensis, and Salmonella newport). In Asticcacaulis excentricus (strain ATCC 15261 / DSM 4724 / KCTC 12464 / NCIMB 9791 / VKM B-1370 / CB 48), this protein is Astexin-1.